Here is a 450-residue protein sequence, read N- to C-terminus: Serine/threonine-protein kinase SSN3 (450 aa).

The region spanning Tyr40–Phe393 is the Protein kinase domain. Residues Ile46–Val54 and Lys71 contribute to the ATP site. Asp173 functions as the Proton acceptor in the catalytic mechanism. Disordered regions lie at residues Ala307–Lys341 and Gln418–Glu450. Positions His310–Tyr326 are enriched in basic residues.

The protein belongs to the protein kinase superfamily. CMGC Ser/Thr protein kinase family. CDC2/CDKX subfamily. Component of the SRB8-11 complex, a regulatory module of the Mediator complex. Interacts with SSN8/FCC1. Requires Mg(2+) as cofactor.

It is found in the nucleus. The catalysed reaction is L-seryl-[protein] + ATP = O-phospho-L-seryl-[protein] + ADP + H(+). It carries out the reaction L-threonyl-[protein] + ATP = O-phospho-L-threonyl-[protein] + ADP + H(+). The enzyme catalyses [DNA-directed RNA polymerase] + ATP = phospho-[DNA-directed RNA polymerase] + ADP + H(+). In terms of biological role, component of the SRB8-11 complex. The SRB8-11 complex is a regulatory module of the Mediator complex which is itself involved in regulation of basal and activated RNA polymerase II-dependent transcription. The SRB8-11 complex may be involved in the transcriptional repression of a subset of genes regulated by Mediator. It may inhibit the association of the Mediator complex with RNA polymerase II to form the holoenzyme complex. The SRB8-11 complex phosphorylates the C-terminal domain (CTD) of the largest subunit of RNA polymerase II. Required for normal growth and secondary metabolism. This chain is Serine/threonine-protein kinase SSN3 (SSN3), found in Gibberella moniliformis (Maize ear and stalk rot fungus).